The following is an 805-amino-acid chain: Transitional endoplasmic reticulum ATPase (805 aa).

Serine 3 carries the phosphoserine modification. Residues 247–253, asparagine 348, histidine 384, and 521–526 contribute to the ATP site; these read PGTGKTL and GCGKTL. The tract at residues 768 to 805 is disordered; sequence FGSFRFPAGGQGGAGPSQGAGGGSGGSHFNEEEDDLYG. A compositionally biased stretch (gly residues) spans 776–793; that stretch reads GGQGGAGPSQGAGGGSGG.

The protein belongs to the AAA ATPase family. Homohexamer. Forms a ring-shaped particle of 12.5 nm diameter, that displays 6-fold radial symmetry. Interacts with the FACT/DUF complex, which includes subunits ssrp1/duf87 and supt16h/duf140. Phosphorylated.

Its subcellular location is the cytoplasm. It is found in the cytosol. The protein localises to the endoplasmic reticulum. It localises to the nucleus. The protein resides in the stress granule. It carries out the reaction ATP + H2O = ADP + phosphate + H(+). ATPase activity is inhibited or reduced by lowering pH from 9.0 to 7.0, and by addition of Ca(2+), EDTA, KNO(3) or by treatment with N-ethylmaleimide (NEM). Its function is as follows. Necessary for the fragmentation of Golgi stacks during mitosis and for their reassembly after mitosis. Involved in the formation of the nuclear envelope, and of the transitional endoplasmic reticulum (tER). The transfer of membranes from the endoplasmic reticulum to the Golgi apparatus occurs via 50-70 nm transition vesicles which derive from part-rough, part-smooth transitional elements of the endoplasmic reticulum (tER). Vesicle budding from the tER is an ATP-dependent process. Involved in endoplasmic reticulum stress-induced pre-emptive quality control, a mechanism that selectively attenuates the translocation of newly synthesized proteins into the endoplasmic reticulum and reroutes them to the cytosol for proteasomal degradation. Involved in clearance process by mediating G3BP1 extraction from stress granules. Also involved in DNA damage response: recruited to double-strand breaks (DSBs) sites and promotes the recruitment of tp53bp1 at DNA damage sites. Together with sprtn metalloprotease, involved in the repair of covalent DNA-protein cross-links (DPCs) during DNA synthesis. Involved in interstrand cross-link repair in response to replication stress by mediating unloading of the ubiquitinated CMG helicase complex. Enhances cell cycle progression and inhibits apoptosis at low temperatures. Essential for the maturation of ubiquitin-containing autophagosomes and the clearance of ubiquitinated protein by autophagy. Acts as a negative regulator of type I interferon production by promoting ubiquitination of rigi. May play a role in the ubiquitin-dependent sorting of membrane proteins to lysosomes where they undergo degradation. May more particularly play a role in caveolins sorting in cells. By controlling the steady-state expression of the IGF1R receptor, indirectly regulates the insulin-like growth factor receptor signaling pathway. The polypeptide is Transitional endoplasmic reticulum ATPase (Xenopus tropicalis (Western clawed frog)).